Reading from the N-terminus, the 238-residue chain is MSALRLRKVDALLAQATRALGAGRRLGFSSRGQHAELSLLPLLEDARIPADGVWLNTAVGPLLLSDAEALLSLLGEVPFTLGGEHQGWYWQLFNQRLSPVVADLLAPVAPFSDTPTELAIGCRVHVRLGSERLDTRLHAAPATLLRLLGSADWQVLNRNLDESWSVSTPLIVGELSLTREQIASLRPGDVVLPARCRFDSAGQGSVTLAGRQWAARTDQQAQHLFLQLSHEEHSHHEY.

Residues 66–238 (DAEALLSLLG…SHEEHSHHEY (173 aa)) are hrcQa-C.

In terms of assembly, interacts with hrcQb.

The protein localises to the cell inner membrane. In terms of biological role, component of the type III secretion system, which is required for effector protein delivery, parasitism, and pathogenicity. Probably participates in the formation of a C-ring-like assembly along with hrcQb. In Pseudomonas syringae pv. syringae, this protein is Type III secretion protein hrcQa (hrcQa).